A 157-amino-acid polypeptide reads, in one-letter code: NudC domain-containing protein 2 (157 aa).

Ser-2 is modified (N-acetylserine). The CS domain maps to 14-104; sequence CGTPWGQWYQ…DAANCWTSLL (91 aa). Residues 134–157 are disordered; it reads FDFSGAEISGNYTKGGPDFSNLEK. Phosphoserine is present on Ser-142. At Tyr-145 the chain carries Phosphotyrosine.

Interacts with LIS1.

The protein resides in the chromosome. It localises to the centromere. It is found in the kinetochore. Its subcellular location is the cytoplasm. The protein localises to the cytoskeleton. The protein resides in the microtubule organizing center. It localises to the centrosome. It is found in the spindle pole. Its function is as follows. May regulate the LIS1/dynein pathway by stabilizing LIS1 with Hsp90 chaperone. The protein is NudC domain-containing protein 2 (NUDCD2) of Homo sapiens (Human).